The following is a 460-amino-acid chain: Methionine aminopeptidase 2-1 (460 aa).

The segment at 1 to 90 is disordered; that stretch reads MGSKSPNGED…SAQAAQQTAP (90 aa). Residues 30–39 show a composition bias toward low complexity; that stretch reads SAAASGLLRG. Residues 42–52 show a composition bias toward acidic residues; that stretch reads EDQDEDGDDDE. The span at 69 to 81 shows a compositional bias: basic residues; that stretch reads TKKRRRNNKKKKS. Residue histidine 212 participates in substrate binding. A divalent metal cation is bound by residues aspartate 233, aspartate 244, and histidine 313. Histidine 321 contacts substrate. Glutamate 346 and glutamate 441 together coordinate a divalent metal cation.

It belongs to the peptidase M24A family. Methionine aminopeptidase eukaryotic type 2 subfamily. It depends on Co(2+) as a cofactor. Requires Zn(2+) as cofactor. The cofactor is Mn(2+). Fe(2+) serves as cofactor.

It localises to the cytoplasm. It catalyses the reaction Release of N-terminal amino acids, preferentially methionine, from peptides and arylamides.. In terms of biological role, cotranslationally removes the N-terminal methionine from nascent proteins. The N-terminal methionine is often cleaved when the second residue in the primary sequence is small and uncharged (Met-Ala-, Cys, Gly, Pro, Ser, Thr, or Val). The polypeptide is Methionine aminopeptidase 2-1 (Leptosphaeria maculans (strain JN3 / isolate v23.1.3 / race Av1-4-5-6-7-8) (Blackleg fungus)).